The chain runs to 472 residues: Adenosylhomocysteinase (472 aa).

Substrate-binding residues include Thr61, Asp139, and Glu198. An NAD(+)-binding site is contributed by 199–201 (TTT). Residues Lys228 and Asp232 each contribute to the substrate site. Residues Asn233, 262 to 267 (GFGDVG), Glu285, Asn320, 341 to 343 (IGH), and Asn386 contribute to the NAD(+) site.

This sequence belongs to the adenosylhomocysteinase family. NAD(+) is required as a cofactor.

It is found in the cytoplasm. It catalyses the reaction S-adenosyl-L-homocysteine + H2O = L-homocysteine + adenosine. Its pathway is amino-acid biosynthesis; L-homocysteine biosynthesis; L-homocysteine from S-adenosyl-L-homocysteine: step 1/1. Functionally, may play a key role in the regulation of the intracellular concentration of adenosylhomocysteine. The protein is Adenosylhomocysteinase of Sphingopyxis alaskensis (strain DSM 13593 / LMG 18877 / RB2256) (Sphingomonas alaskensis).